Consider the following 227-residue polypeptide: Small ribosomal subunit protein uS3 (227 aa).

One can recognise a KH type-2 domain in the interval Ile39–Lys108.

This sequence belongs to the universal ribosomal protein uS3 family. As to quaternary structure, part of the 30S ribosomal subunit. Forms a tight complex with proteins S10 and S14.

Binds the lower part of the 30S subunit head. Binds mRNA in the 70S ribosome, positioning it for translation. The protein is Small ribosomal subunit protein uS3 of Persephonella marina (strain DSM 14350 / EX-H1).